We begin with the raw amino-acid sequence, 501 residues long: G protein-activated inward rectifier potassium channel 1 (501 aa).

The disordered stretch occupies residues 1 to 40; it reads MSALRRKFGDDYQVVTTSSSGSGLQPQGPGQDPQQQLVPK. Over 1–80 the chain is Cytoplasmic; the sequence is MSALRRKFGD…LFTTLVDLKW (80 aa). Residues 18 to 38 are compositionally biased toward low complexity; the sequence is SSSGSGLQPQGPGQDPQQQLV. The chain crosses the membrane as a helical span at residues 81 to 105; the sequence is RWNLFIFILTYTVAWLFMASMWWVI. Residues 106 to 129 are Extracellular-facing; sequence AYTRGDLNKAHVGNYTPCVANVYN. N119 is a glycosylation site (N-linked (GlcNAc...) asparagine). Residues 130–141 constitute an intramembrane region (helical; Pore-forming); the sequence is FPSAFLFFIETE. The pore-forming intramembrane region spans 142-148; it reads ATIGYGY. A Selectivity filter motif is present at residues 143-148; that stretch reads TIGYGY. Residues 149-157 are Extracellular-facing; sequence RYITDKCPE. The helical transmembrane segment at 158 to 179 threads the bilayer; it reads GIILFLFQSILGSIVDAFLIGC. Topologically, residues 180–501 are cytoplasmic; it reads MFIKMSQPKK…LRKMNSDRFT (322 aa). A polyphosphoinositide (PIP2)-binding region spans residues 182-209; the sequence is IKMSQPKKRAETLMFSEHAVISMRDGKL. A phosphoserine mark is found at S385 and S424.

This sequence belongs to the inward rectifier-type potassium channel (TC 1.A.2.1) family. KCNJ3 subfamily. As to quaternary structure, associates with KCNJ5/GIRK4 or KCNJ6/GIRK2 to form a G-protein activated heteromultimer pore-forming unit. The resulting inward current is much larger. Associates with KCNJ9/GIRK3 to form a G-protein activated heteromultimer pore-forming unit.

The protein localises to the membrane. It carries out the reaction K(+)(in) = K(+)(out). With respect to regulation, heteromultimer composed of KCNJ3/GIRK1 and KCNJ5/GIRK4 is activated by phosphatidylinositol 4,5 biphosphate (PtdIns(4,5)P2). Its function is as follows. Inward rectifier potassium channels are characterized by a greater tendency to allow potassium to flow into the cell rather than out of it. Their voltage dependence is regulated by the concentration of extracellular potassium; as external potassium is raised, the voltage range of the channel opening shifts to more positive voltages. The inward rectification is mainly due to the blockage of outward current by internal magnesium. This potassium channel is controlled by G proteins. This receptor plays a crucial role in regulating the heartbeat. The sequence is that of G protein-activated inward rectifier potassium channel 1 (KCNJ3) from Homo sapiens (Human).